The chain runs to 85 residues: Large ribosomal subunit protein bL27 (85 aa).

Belongs to the bacterial ribosomal protein bL27 family.

The sequence is that of Large ribosomal subunit protein bL27 from Pseudomonas fluorescens (strain SBW25).